The primary structure comprises 119 residues: Ribonuclease P protein component (119 aa).

It belongs to the RnpA family. In terms of assembly, consists of a catalytic RNA component (M1 or rnpB) and a protein subunit.

The enzyme catalyses Endonucleolytic cleavage of RNA, removing 5'-extranucleotides from tRNA precursor.. Its function is as follows. RNaseP catalyzes the removal of the 5'-leader sequence from pre-tRNA to produce the mature 5'-terminus. It can also cleave other RNA substrates such as 4.5S RNA. The protein component plays an auxiliary but essential role in vivo by binding to the 5'-leader sequence and broadening the substrate specificity of the ribozyme. The protein is Ribonuclease P protein component of Sodalis glossinidius (strain morsitans).